A 234-amino-acid polypeptide reads, in one-letter code: Sugar fermentation stimulation protein homolog (234 aa).

The protein belongs to the SfsA family.

In Shewanella frigidimarina (strain NCIMB 400), this protein is Sugar fermentation stimulation protein homolog.